Here is a 156-residue protein sequence, read N- to C-terminus: Deoxyuridine 5'-triphosphate nucleotidohydrolase (156 aa).

Substrate-binding positions include 74–76, Asn-87, 91–93, and Lys-101; these read RSG and TID.

Belongs to the dUTPase family. The cofactor is Mg(2+).

It carries out the reaction dUTP + H2O = dUMP + diphosphate + H(+). It participates in pyrimidine metabolism; dUMP biosynthesis; dUMP from dCTP (dUTP route): step 2/2. Its function is as follows. This enzyme is involved in nucleotide metabolism: it produces dUMP, the immediate precursor of thymidine nucleotides and it decreases the intracellular concentration of dUTP so that uracil cannot be incorporated into DNA. The polypeptide is Deoxyuridine 5'-triphosphate nucleotidohydrolase (Wolbachia sp. subsp. Brugia malayi (strain TRS)).